The following is an 805-amino-acid chain: Phenylalanine--tRNA ligase beta subunit (805 aa).

One can recognise a tRNA-binding domain in the interval 39–148 (APPFTGVVVA…AALRPGTDIR (110 aa)). A B5 domain is found at 399-474 (PVREPVRMRL…RVYGFERIPD (76 aa)). Residues D452, D458, E461, and E462 each coordinate Mg(2+). Residues 703–804 (SRQPAVVRDL…LVAAHNARQR (102 aa)) form the FDX-ACB domain.

Belongs to the phenylalanyl-tRNA synthetase beta subunit family. Type 1 subfamily. In terms of assembly, tetramer of two alpha and two beta subunits. Mg(2+) is required as a cofactor.

It is found in the cytoplasm. It carries out the reaction tRNA(Phe) + L-phenylalanine + ATP = L-phenylalanyl-tRNA(Phe) + AMP + diphosphate + H(+). The protein is Phenylalanine--tRNA ligase beta subunit of Bordetella parapertussis (strain 12822 / ATCC BAA-587 / NCTC 13253).